The chain runs to 384 residues: Odorant receptor 33c (384 aa).

Topologically, residues 1–35 are cytoplasmic; the sequence is MVIIDSLSFYRPFWICMRLLVPTFFKDSSRPVQLY. Residues 36 to 56 traverse the membrane as a helical segment; the sequence is VVLLHILVTLWFPLHLLLHLL. The Extracellular segment spans residues 57–63; that stretch reads LLPSTAE. The helical transmembrane segment at 64–84 threads the bilayer; that stretch reads FFKNLTMSLTCVACSLKHVAH. Over 85–128 the chain is Cytoplasmic; it reads LYHLPQIVEIESLIEQLDTFIASEQEHRYYRDHVHCHARRFTRC. The helical transmembrane segment at 129–149 threads the bilayer; that stretch reads LYISFGMIYALFLFGVFVQVI. Residues 150 to 169 are Extracellular-facing; sequence SGNWELLYPAYFPFDLESNR. A helical transmembrane segment spans residues 170-190; the sequence is FLGAVALGYQVFSMLVEGFQG. Residues 191–251 lie on the Cytoplasmic side of the membrane; the sequence is LGNDTYTPLT…LVRFHNLVSR (61 aa). A helical transmembrane segment spans residues 252–272; sequence TISEVQLVQLGGCGATLCIIV. Topologically, residues 273-274 are extracellular; the sequence is SY. The chain crosses the membrane as a helical span at residues 275–295; that stretch reads MLFFVGDTISLVYYLVFFGVV. Residues 296-358 are Cytoplasmic-facing; it reads CVQLFPSCYF…WIIKAGGLIE (63 aa). A helical transmembrane segment spans residues 359–379; it reads LNLNAFFATLKMAYSLFAVVV. Residues 380–384 are Extracellular-facing; it reads RAKGI.

Belongs to the insect chemoreceptor superfamily. Heteromeric odorant receptor channel (TC 1.A.69) family. Or2a subfamily. Interacts with Orco. Complexes exist early in the endomembrane system in olfactory sensory neurons (OSNs), coupling these complexes to the conserved ciliary trafficking pathway. Expressed in the antenna and in a subset of 18 olfactory receptor neurons in the maxillary palp.

The protein localises to the cell membrane. Odorant receptor which mediates acceptance or avoidance behavior, depending on its substrates. The odorant receptor repertoire encodes a large collection of odor stimuli that vary widely in identity, intensity, and duration. May form a complex with Orco to form odorant-sensing units, providing sensitive and prolonged odorant signaling and calcium permeability. This chain is Odorant receptor 33c (Or33c), found in Drosophila melanogaster (Fruit fly).